The primary structure comprises 160 residues: Transcription elongation factor GreA (160 aa).

Residues 1–72 (MAEKTYVMTL…QIQILETKIR (72 aa)) adopt a coiled-coil conformation.

The protein belongs to the GreA/GreB family.

Its function is as follows. Necessary for efficient RNA polymerase transcription elongation past template-encoded arresting sites. The arresting sites in DNA have the property of trapping a certain fraction of elongating RNA polymerases that pass through, resulting in locked ternary complexes. Cleavage of the nascent transcript by cleavage factors such as GreA or GreB allows the resumption of elongation from the new 3'terminus. GreA releases sequences of 2 to 3 nucleotides. This is Transcription elongation factor GreA from Streptococcus thermophilus (strain CNRZ 1066).